The chain runs to 104 residues: Small ribosomal subunit protein uS10 (104 aa).

This sequence belongs to the universal ribosomal protein uS10 family. As to quaternary structure, part of the 30S ribosomal subunit.

Involved in the binding of tRNA to the ribosomes. The polypeptide is Small ribosomal subunit protein uS10 (Thermosynechococcus vestitus (strain NIES-2133 / IAM M-273 / BP-1)).